The primary structure comprises 113 residues: Large ribosomal subunit protein bL19 (113 aa).

It belongs to the bacterial ribosomal protein bL19 family.

This protein is located at the 30S-50S ribosomal subunit interface and may play a role in the structure and function of the aminoacyl-tRNA binding site. This chain is Large ribosomal subunit protein bL19, found in Rhodococcus jostii (strain RHA1).